The primary structure comprises 442 residues: D-galactonate dehydratase family member SSLG_02014 (442 aa).

Histidine 161 lines the substrate pocket. Tyrosine 197 (proton donor/acceptor) is an active-site residue. Residue aspartate 246 participates in Mg(2+) binding. Histidine 248 (proton donor/acceptor) is an active-site residue. Mg(2+) contacts are provided by glutamate 272 and glutamate 298. Glutamate 298, arginine 319, histidine 348, aspartate 352, and glutamate 375 together coordinate substrate.

Belongs to the mandelate racemase/muconate lactonizing enzyme family. GalD subfamily. Requires Mg(2+) as cofactor.

It carries out the reaction D-mannonate = 2-dehydro-3-deoxy-D-gluconate + H2O. Functionally, has low D-mannonate dehydratase activity (in vitro), suggesting that this is not a physiological substrate and that it has no significant role in D-mannonate degradation in vivo. Has no detectable activity with a panel of 70 other acid sugars (in vitro). The sequence is that of D-galactonate dehydratase family member SSLG_02014 from Streptomyces sp. (strain SPB78).